The sequence spans 125 residues: Aspartate 1-decarboxylase 2 (125 aa).

Ser25 functions as the Schiff-base intermediate with substrate; via pyruvic acid in the catalytic mechanism. Ser25 is subject to Pyruvic acid (Ser). Substrate is bound at residue Thr57. The Proton donor role is filled by Tyr58. 73 to 75 (GAA) contributes to the substrate binding site.

This sequence belongs to the PanD family. In terms of assembly, heterooctamer of four alpha and four beta subunits. Requires pyruvate as cofactor. Post-translationally, is synthesized initially as an inactive proenzyme, which is activated by self-cleavage at a specific serine bond to produce a beta-subunit with a hydroxyl group at its C-terminus and an alpha-subunit with a pyruvoyl group at its N-terminus.

The protein resides in the cytoplasm. The catalysed reaction is L-aspartate + H(+) = beta-alanine + CO2. It participates in cofactor biosynthesis; (R)-pantothenate biosynthesis; beta-alanine from L-aspartate: step 1/1. In terms of biological role, catalyzes the pyruvoyl-dependent decarboxylation of aspartate to produce beta-alanine. This Gloeobacter violaceus (strain ATCC 29082 / PCC 7421) protein is Aspartate 1-decarboxylase 2.